Consider the following 344-residue polypeptide: Acyl-CoA ligase clz12 (344 aa).

2 AMP-binding regions span residues 2–239 and 248–322; these read VQRS…IIKV and ELET…PSGK.

This sequence belongs to the ATP-dependent AMP-binding enzyme family.

Its pathway is secondary metabolite biosynthesis. Acyl-CoA ligase; part of the gene cluster that mediates the biosynthesis of squalestatin S1 (SQS1, also known as zaragozic acid A), a heavily oxidized fungal polyketide that offers potent cholesterol lowering activity by targeting squalene synthase (SS). SQS1 is composed of a 2,8-dioxobicyclic[3.2.1]octane-3,4,5-tricarboxyclic acid core that is connected to two lipophilic polyketide arms. These initial steps feature the priming of an unusual benzoic acid starter unit onto the highly reducing polyketide synthase clz14, followed by oxaloacetate extension and product release to generate a tricarboxylic acid containing product. The phenylalanine ammonia lyase (PAL) clz10 and the acyl-CoA ligase clz12 are involved in transforming phenylalanine into benzoyl-CoA. The citrate synthase-like protein clz17 is involved in connecting the C-alpha-carbons of the hexaketide chain and oxaloacetate to afford the tricarboxylic acid unit. The potential hydrolytic enzymes, clz11 and clz13, are in close proximity to pks2 and may participate in product release. On the other side, the tetraketide arm is synthesized by a the squalestatin tetraketide synthase clz2 and enzymatically esterified to the core in the last biosynthetic step, by the acetyltransferase clz6. The biosynthesis of the tetraketide must involve 3 rounds of chain extension. After the first and second rounds methyl-transfer occurs, and in all rounds of extension the ketoreductase and dehydratase are active. The enoyl reductase and C-MeT of clz2 are not active in the final round of extension. The acetyltransferase clz6 appears to have a broad substrate selectivity for its acyl CoA substrate, allowing the in vitro synthesis of novel squalestatins. The biosynthesis of SQS1 requires several oxidative steps likely performed by oxidoreductases clz3, clz15 and clz16. Finally, in support of the identification of the cluster as being responsible for SQS1 production, the cluster contains a gene encoding a putative squalene synthase (SS) clz20, suggesting a likely mechanism for self-resistance. In Cochliobolus lunatus (Filamentous fungus), this protein is Acyl-CoA ligase clz12.